The sequence spans 506 residues: Apolipoprotein N-acyltransferase (506 aa).

Transmembrane regions (helical) follow at residues 10–30 (ANAK…AGWG), 33–53 (LALP…PLWW), 57–77 (VLAP…FYGS), 105–125 (IWLC…LLMA), 139–159 (WGVT…LWWI), 176–196 (LAGP…VTLS), and 205–225 (VGLA…SVRV). The CN hydrolase domain occupies 238–473 (IQGNIPTREK…FVIYAATIFR (236 aa)). Glu279 functions as the Proton acceptor in the catalytic mechanism. Residue Lys336 is part of the active site. Residue Cys385 is the Nucleophile of the active site. Residues 483 to 500 (YGDWLLPLLLGMLSLSVL) form a helical membrane-spanning segment.

The protein belongs to the CN hydrolase family. Apolipoprotein N-acyltransferase subfamily.

The protein resides in the cell inner membrane. It catalyses the reaction N-terminal S-1,2-diacyl-sn-glyceryl-L-cysteinyl-[lipoprotein] + a glycerophospholipid = N-acyl-S-1,2-diacyl-sn-glyceryl-L-cysteinyl-[lipoprotein] + a 2-acyl-sn-glycero-3-phospholipid + H(+). It participates in protein modification; lipoprotein biosynthesis (N-acyl transfer). Its function is as follows. Catalyzes the phospholipid dependent N-acylation of the N-terminal cysteine of apolipoprotein, the last step in lipoprotein maturation. In Thermosynechococcus vestitus (strain NIES-2133 / IAM M-273 / BP-1), this protein is Apolipoprotein N-acyltransferase.